Reading from the N-terminus, the 568-residue chain is Probable asparagine--tRNA ligase, cytoplasmic (568 aa).

Belongs to the class-II aminoacyl-tRNA synthetase family.

Its subcellular location is the cytoplasm. The catalysed reaction is tRNA(Asn) + L-asparagine + ATP = L-asparaginyl-tRNA(Asn) + AMP + diphosphate + H(+). In terms of biological role, cytosolic asparaginyl-tRNA synthetase which catalyzes the specific attachment of asparagine to its cognate tRNA. The polypeptide is Probable asparagine--tRNA ligase, cytoplasmic (nrs1) (Schizosaccharomyces pombe (strain 972 / ATCC 24843) (Fission yeast)).